The primary structure comprises 258 residues: MRILLTNDDGIHAEGLAVLERIARKLSDDVWVVAPETDQSGLAHSLTLSEPLRLRQIDDRHFALRGTPTDCVIMGVRHVLPGAPDLILSGVNSGANIADDVTYSGTVAGAMEGTLLGVRSIALSQEYEYEGDRRIVPWETAETHAPDLIKKLMEAGWPEGVLLNLNFPNCGADEVKGTRVTAQGKLSHDARLDERRDGRGFPYFWLHFGRGKAPVADDSDIAAIRSDCISVTPLHLDLTAHKVRAELSAALGVVELGG.

A divalent metal cation is bound by residues Asp-8, Asp-9, Ser-40, and Asn-92.

The protein belongs to the SurE nucleotidase family. A divalent metal cation serves as cofactor.

The protein resides in the cytoplasm. The catalysed reaction is a ribonucleoside 5'-phosphate + H2O = a ribonucleoside + phosphate. Its function is as follows. Nucleotidase that shows phosphatase activity on nucleoside 5'-monophosphates. The sequence is that of 5'-nucleotidase SurE from Brucella anthropi (strain ATCC 49188 / DSM 6882 / CCUG 24695 / JCM 21032 / LMG 3331 / NBRC 15819 / NCTC 12168 / Alc 37) (Ochrobactrum anthropi).